A 186-amino-acid polypeptide reads, in one-letter code: Elongation factor P (186 aa).

It belongs to the elongation factor P family.

Its subcellular location is the cytoplasm. Its pathway is protein biosynthesis; polypeptide chain elongation. Its function is as follows. Involved in peptide bond synthesis. Stimulates efficient translation and peptide-bond synthesis on native or reconstituted 70S ribosomes in vitro. Probably functions indirectly by altering the affinity of the ribosome for aminoacyl-tRNA, thus increasing their reactivity as acceptors for peptidyl transferase. The protein is Elongation factor P of Shewanella sp. (strain ANA-3).